Consider the following 96-residue polypeptide: Large ribosomal subunit protein uL23 (96 aa).

Belongs to the universal ribosomal protein uL23 family. In terms of assembly, part of the 50S ribosomal subunit. Contacts protein L29, and trigger factor when it is bound to the ribosome.

Functionally, one of the early assembly proteins it binds 23S rRNA. One of the proteins that surrounds the polypeptide exit tunnel on the outside of the ribosome. Forms the main docking site for trigger factor binding to the ribosome. This is Large ribosomal subunit protein uL23 from Finegoldia magna (strain ATCC 29328 / DSM 20472 / WAL 2508) (Peptostreptococcus magnus).